We begin with the raw amino-acid sequence, 874 residues long: Probable cation-transporting P-type ATPase (874 aa).

Residues 1-41 (MNSWTGLSEQAAIKSRQEHGANFLPEKKATPFWLLFLQQFK) lie on the Cytoplasmic side of the membrane. The helical transmembrane segment at 42 to 62 (SLVVILLLLASLLSFVVAIVS) threads the bilayer. At 63-79 (GLRSNWNFNHDLIIEWV) the chain is on the extracellular side. The helical transmembrane segment at 80–100 (QPFIILLTVFANSLIGSIQEF) threads the bilayer. The Cytoplasmic segment spans residues 101 to 237 (KAQKSASALK…TKLSPLQQKL (137 aa)). Residues 238–257 (EKIGKWFSWFGLGLFAVVFL) form a helical membrane-spanning segment. The Extracellular segment spans residues 258-275 (VQTALLGFDNFTNNWSIA). The helical transmembrane segment at 276–293 (LIGAIALVVAIIPEGLVT) threads the bilayer. At 294–644 (FINVIFALSV…EEGRKTFLTC (351 aa)) the chain is on the cytoplasmic side. Asp-331 acts as the 4-aspartylphosphate intermediate in catalysis. Asp-589 and Asp-593 together coordinate Mg(2+). The chain crosses the membrane as a helical span at residues 645-664 (KRVLLNLFLTSIAGTVVVLL). Topologically, residues 665-687 (GLFILGQVFKTNLLQQGHDFQVF) are extracellular. A helical membrane pass occupies residues 688–708 (SPTQLLIINLFVHGFPAVALA). The Cytoplasmic segment spans residues 709-726 (VQPVKEKLMVGSFSTKNL). A helical transmembrane segment spans residues 727-749 (FYNRQGFDLIWQSLFLSFLTLLF). The Extracellular segment spans residues 750 to 770 (YSLGIIYAINNRDLQTSGDLI). Residues 771 to 790 (NRAGSTCGFFILGASAALNS) form a helical membrane-spanning segment. Residues 791-803 (LNLMVDKPLLMTN) lie on the Cytoplasmic side of the membrane. Residues 804–826 (PWFFKLVWIGSLASILVFLLIIF) form a helical membrane-spanning segment. The Extracellular segment spans residues 827–844 (INPLGLVFNVLQDLTNHP). A helical transmembrane segment spans residues 845–865 (VLISYSFGGVILYMGMNEVVK). Over 866–874 (LIRLGYGNI) the chain is Cytoplasmic.

It belongs to the cation transport ATPase (P-type) (TC 3.A.3) family. Type II subfamily.

It is found in the cell membrane. The catalysed reaction is ATP + H2O = ADP + phosphate + H(+). Its function is as follows. Could mediate calcium influx. In Mycoplasma genitalium (strain ATCC 33530 / DSM 19775 / NCTC 10195 / G37) (Mycoplasmoides genitalium), this protein is Probable cation-transporting P-type ATPase (pacL).